The following is a 380-amino-acid chain: Queuine tRNA-ribosyltransferase (380 aa).

Residue aspartate 96 is the Proton acceptor of the active site. Substrate-binding positions include 96-100 (DSGGF), aspartate 150, glutamine 193, and glycine 220. Residues 251–257 (GVGAPDS) are RNA binding. The active-site Nucleophile is the aspartate 270. The tract at residues 275 to 279 (TRIAR) is RNA binding; important for wobble base 34 recognition. Positions 308, 310, 313, and 339 each coordinate Zn(2+).

The protein belongs to the queuine tRNA-ribosyltransferase family. In terms of assembly, homodimer. Within each dimer, one monomer is responsible for RNA recognition and catalysis, while the other monomer binds to the replacement base PreQ1. It depends on Zn(2+) as a cofactor.

It carries out the reaction 7-aminomethyl-7-carbaguanine + guanosine(34) in tRNA = 7-aminomethyl-7-carbaguanosine(34) in tRNA + guanine. It participates in tRNA modification; tRNA-queuosine biosynthesis. In terms of biological role, catalyzes the base-exchange of a guanine (G) residue with the queuine precursor 7-aminomethyl-7-deazaguanine (PreQ1) at position 34 (anticodon wobble position) in tRNAs with GU(N) anticodons (tRNA-Asp, -Asn, -His and -Tyr). Catalysis occurs through a double-displacement mechanism. The nucleophile active site attacks the C1' of nucleotide 34 to detach the guanine base from the RNA, forming a covalent enzyme-RNA intermediate. The proton acceptor active site deprotonates the incoming PreQ1, allowing a nucleophilic attack on the C1' of the ribose to form the product. After dissociation, two additional enzymatic reactions on the tRNA convert PreQ1 to queuine (Q), resulting in the hypermodified nucleoside queuosine (7-(((4,5-cis-dihydroxy-2-cyclopenten-1-yl)amino)methyl)-7-deazaguanosine). This is Queuine tRNA-ribosyltransferase from Streptococcus pneumoniae (strain Hungary19A-6).